The sequence spans 437 residues: Ribosomal protein uS12 methylthiotransferase RimO (437 aa).

One can recognise an MTTase N-terminal domain in the interval 3 to 118 (KKFYITTLGC…AGKILREKFP (116 aa)). The [4Fe-4S] cluster site is built by C12, C48, C81, C157, C161, and C164. Residues 143–370 (NYSKPYAYVK…RDSHLEILEE (228 aa)) form the Radical SAM core domain. Residues 373 to 437 (ESRIGRTYDA…YEYDMNGTWV (65 aa)) form the TRAM domain.

Belongs to the methylthiotransferase family. RimO subfamily. Requires [4Fe-4S] cluster as cofactor.

It is found in the cytoplasm. It catalyses the reaction L-aspartate(89)-[ribosomal protein uS12]-hydrogen + (sulfur carrier)-SH + AH2 + 2 S-adenosyl-L-methionine = 3-methylsulfanyl-L-aspartate(89)-[ribosomal protein uS12]-hydrogen + (sulfur carrier)-H + 5'-deoxyadenosine + L-methionine + A + S-adenosyl-L-homocysteine + 2 H(+). Catalyzes the methylthiolation of an aspartic acid residue of ribosomal protein uS12. The sequence is that of Ribosomal protein uS12 methylthiotransferase RimO from Leptospira interrogans serogroup Icterohaemorrhagiae serovar copenhageni (strain Fiocruz L1-130).